A 562-amino-acid chain; its full sequence is NAD-dependent malic enzyme (562 aa).

The active-site Proton donor is Y101. R154 is an NAD(+) binding site. Residue K172 is the Proton acceptor of the active site. Residues E243, D244, and D267 each contribute to the a divalent metal cation site. Residues D267 and N415 each coordinate NAD(+).

This sequence belongs to the malic enzymes family. As to quaternary structure, homotetramer. The cofactor is Mg(2+). Mn(2+) is required as a cofactor.

It carries out the reaction (S)-malate + NAD(+) = pyruvate + CO2 + NADH. The enzyme catalyses oxaloacetate + H(+) = pyruvate + CO2. The polypeptide is NAD-dependent malic enzyme (Colwellia psychrerythraea (strain 34H / ATCC BAA-681) (Vibrio psychroerythus)).